Consider the following 459-residue polypeptide: Glycosyl hydrolase family 109 protein 1 (459 aa).

Residues 1–31 constitute a signal peptide (tat-type signal); that stretch reads MHNIHRRHFLKAAGAVTAGLVTANIALNANA. NAD(+)-binding positions include 64–65, D86, 135–138, 155–156, and N184; these read ER, WEWH, and EV. Substrate contacts are provided by residues Y213, R232, 244 to 247, and Y326; that span reads YPTH. Y244 lines the NAD(+) pocket.

It belongs to the Gfo/Idh/MocA family. Glycosyl hydrolase 109 subfamily. The cofactor is NAD(+). In terms of processing, predicted to be exported by the Tat system. The position of the signal peptide cleavage has not been experimentally proven.

In terms of biological role, glycosidase. In Shewanella sp. (strain MR-4), this protein is Glycosyl hydrolase family 109 protein 1.